We begin with the raw amino-acid sequence, 218 residues long: Small ribosomal subunit protein uS3c (218 aa).

A KH type-2 domain is found at 47-118 (IRRHMRSSSN…KLNIAIVKVA (72 aa)).

The protein belongs to the universal ribosomal protein uS3 family. Part of the 30S ribosomal subunit.

Its subcellular location is the plastid. The protein localises to the chloroplast. In Cycas taitungensis (Prince sago), this protein is Small ribosomal subunit protein uS3c (rps3).